Here is a 447-residue protein sequence, read N- to C-terminus: Gustatory receptor family protein 3 (447 aa).

At 1–69 (MTITASNTLE…HTHSSARNTM (69 aa)) the chain is on the extracellular side. Residues 70–90 (FKWPLTIYNYLTLAILTAATI) traverse the membrane as a helical segment. Residues 91-116 (RRISQIKQKSATNEEKDAAFHVLNPT) are Cytoplasmic-facing. A helical transmembrane segment spans residues 117–137 (FVLTLCHALLMFSGLAAGFLL). The Extracellular portion of the chain corresponds to 138 to 171 (LKLQKQREKMYHVLDQGLGRNRNEEHDSHHFKLN). A helical membrane pass occupies residues 172 to 192 (KLFISISFSFAAALSFVQIAT). The Cytoplasmic portion of the chain corresponds to 193–211 (KMRYLDLPDTPDLINRKIY). The helical transmembrane segment at 212–232 (FVILEGYVIFIASSCISLVAI) threads the bilayer. At 233-292 (LFFQLCRILQFSIGQLIEEMVPKEKEECPLPEQSLQQIHDVQIHYQEISNAKLYIEQNFS) the chain is on the extracellular side. Residues 293–313 (FSLFYTYGCCIPLTCLLGYIA) form a helical membrane-spanning segment. Residues 314-328 (FRNGIQADMAETFSV) lie on the Cytoplasmic side of the membrane. A helical transmembrane segment spans residues 329–349 (AIWLTNTMLALMLFSIPAFMI). Residues 350–405 (AEEGDKLLTASFKMYHETLCEERDLLVLSQMSFLSFQMHATKLTLTAGNFFMMNRK) lie on the Extracellular side of the membrane. The chain crosses the membrane as a helical span at residues 406–426 (IMISLFSAIFTYFLILVQFDA). Residues 427–447 (EKERAGECNNQSRVLIVQPPV) are Cytoplasmic-facing.

Belongs to the insect chemoreceptor superfamily. Gustatory receptor (GR) family. In terms of tissue distribution, expressed in I2 pharyngeal neurons.

It is found in the membrane. Functionally, chemoreceptor involved in light-induced avoidance behavior. Probably acts as a molecular sensor in I2 pharyngeal neurons, required for the inhibition of feeding in response to light and hydrogen peroxide. Involved in circadian rhythms, probably by acting as a light sensor. In contrast to lite-1, does not act as a photoreceptor. In Caenorhabditis elegans, this protein is Gustatory receptor family protein 3.